A 397-amino-acid chain; its full sequence is Phosphoglycerate kinase (397 aa).

Substrate-binding positions include 25-27, R41, 64-67, R118, and R151; these read DLN and HLGR. ATP-binding positions include K202, E324, and 350 to 353; that span reads GGDT.

Belongs to the phosphoglycerate kinase family. As to quaternary structure, monomer.

It localises to the cytoplasm. It carries out the reaction (2R)-3-phosphoglycerate + ATP = (2R)-3-phospho-glyceroyl phosphate + ADP. Its pathway is carbohydrate degradation; glycolysis; pyruvate from D-glyceraldehyde 3-phosphate: step 2/5. The chain is Phosphoglycerate kinase from Albidiferax ferrireducens (strain ATCC BAA-621 / DSM 15236 / T118) (Rhodoferax ferrireducens).